A 311-amino-acid polypeptide reads, in one-letter code: Probable dihydroorotate dehydrogenase A (fumarate) (311 aa).

FMN is bound by residues Ser20 and 44-45; that span reads KT. Residues Lys44, 68-72, and Asn127 contribute to the substrate site; that span reads NSMGL. FMN is bound at residue Asn127. Cys130 (nucleophile) is an active-site residue. FMN-binding residues include Lys164 and Ile192. 193 to 194 contributes to the substrate binding site; sequence NS. Residues Gly221, 249–250, and 271–272 contribute to the FMN site; these read GG and GT.

This sequence belongs to the dihydroorotate dehydrogenase family. Type 1 subfamily. As to quaternary structure, homodimer. It depends on FMN as a cofactor.

It is found in the cytoplasm. It catalyses the reaction (S)-dihydroorotate + fumarate = orotate + succinate. Its pathway is pyrimidine metabolism; UMP biosynthesis via de novo pathway. In terms of biological role, catalyzes the conversion of dihydroorotate to orotate with fumarate as the electron acceptor. The chain is Probable dihydroorotate dehydrogenase A (fumarate) (pyrDA) from Enterococcus faecalis (strain ATCC 700802 / V583).